We begin with the raw amino-acid sequence, 929 residues long: MTASSVEQLRKEGNELFKCGDYGGALAAYTQALGLDATPQDQAVLHRNRAACYLKLEDYDKAETEASKAIEKDGGDVKALYRRSQALEKLGRLDQAVLDLQRCVSLEPKNKVFQEALRNIGGQIQEKVRYMSSTDAKVEQMFQILLDPEEKGTEKKQKASQNLVVLAREDAGAEKTLRSNGVQLLQRLLDTGETDLMLAALRTLVGICSEHQSRTVATLSILGTRRVVSILGVESQSVSLAACHLLQVMFDALKEGVKKGFRGKEGAIIVDPARELKVLISNLLDLLTEVGVSGQGRDNALTLLIKAVPRKSLKDPNNSLTLWVIDQGLKKILEVGGSLQDPPGELAVTANSRMSASILLSKLFDDLKCDAERENFHRLCENYIKSWFEGRGLAGKLRAIQTVSCLLQGPCDAGNRALELSGVMEGVIALCASEQEEEQLVAVEALIHAAGKAKRASFITANGVSLLKDLYKRSEKDSIRIRALVGLCKLGSAGGTDFSMKQFAEGSTLKLAKQCRKWLCNDQIDAGTRRWAVEGLAYLTFDADVKEEFVEDAAALKALFQLSRSEERSVLFAVASALVNCTNSYDYEEPDPKMVELAKYAKQHVPEQHPKDKPSFVRARVKKLLAAGVVSAMVYMVKTESPVLTSSCRELLSRIFLALVEEVEDRGTVVAQGGGRALIPLALEGTDVGQTKAAQALAKLTITSNPEMTFPGERIYEVVRPLVSLLHLNCSGLQNFEALMALTNLAGISERLRQKILKEKAVPMIEGYMFEEHEMIRRASTECMCNLAMSKEVQDLFEAEGNDRLKLLVLYSGEDDELLQRAAAGGLAMLTSMRPTLCSRIPQVTTHWLEILQALLLSSNQELQHRGAVVVLNMVEASREIASTLMESEMMEILSVLAKGDHSPVTRAAAACLDKAVEYGLIQPNQDGE.

TPR repeat units lie at residues 6–39 (VEQL…DATP), 43–76 (AVLH…DGGD), and 77–110 (VKAL…EPKN). Position 55 is an N6-acetyllysine (Lys-55). Lys-468 carries the N6-acetyllysine modification.

In terms of assembly, interacts with PGR isoforms A and B as well as with NR3C1 in the absence of ligand, and with HSP90AB1. Binding to HSP90AB1 involves 2 UNC45A monomers per HSP90AB1 dimer.

The protein resides in the cytoplasm. It is found in the perinuclear region. It localises to the nucleus. Its function is as follows. May act as co-chaperone for HSP90 (Potential). Prevents the stimulation of HSP90AB1 ATPase activity by AHSA1. Positive factor in promoting PGR function in the cell. May be necessary for proper folding of myosin (Potential). Necessary for normal cell proliferation. Necessary for normal myotube formation and myosin accumulation during muscle cell development. May play a role in erythropoiesis in stroma cells in the spleen. The protein is Protein unc-45 homolog A (UNC45A) of Pongo abelii (Sumatran orangutan).